The chain runs to 298 residues: Dioxygenase aneA (298 aa).

Residues histidine 134, aspartate 136, and histidine 213 each coordinate Fe cation.

The protein belongs to the PhyH family. Homodimer. The cofactor is Fe cation.

The enzyme catalyses aculene D + 2-oxoglutarate + O2 = aculene C + succinate + CO2 + H2O. It carries out the reaction aculene B + 2-oxoglutarate + O2 = aculene A + succinate + CO2 + H2O. It functions in the pathway secondary metabolite biosynthesis. In terms of biological role, dioxygenase; part of the gene cluster that mediates the biosynthesis of aculenes, a unique type of norsesquiterpenes that contain a nordaucane skeleton linked to an L-proline moiety and are of mixed biosynthetic origin. The pathway begins with the synthesis of dauca-4,7-diene by the terpene cyclase aneC using farnesyl pyrophosphate (FPP) as substrate. The cytochrome P450 monooxygenase aneF then performs the initial oxidation at C-12 of dauca-4,7-diene to yield asperaculane D. Asperaculane D is substrate of the cytochrome P450 monooxygenase aneD for C-10 hydroxylation to yield asperaculane E. The cytochrome P450 monooxygenase aneG then converts asperaculane E into aculene D via C-2 oxidation. The monomodular nonribosomal peptide synthase aneB adenylates L-proline and the thiohydrolase aneE transfers this activated L-proline derivative to aculenes D and C to produce respectively aculenes B and A. The dioxygenase aneA converts aculene D into aculene C, and aculene B into aculene A by introducing the 5,6-alkene moiety. Asperculanes A, B, C and F, as well as 14-prolyl asperculane C, might be shunt products of the pathway. In Aspergillus aculeatus (strain ATCC 16872 / CBS 172.66 / WB 5094), this protein is Dioxygenase aneA.